The sequence spans 187 residues: Orotate phosphoribosyltransferase (187 aa).

110–118 contributes to the 5-phospho-alpha-D-ribose 1-diphosphate binding site; the sequence is EDVVTTGGS. The orotate site is built by T114 and R142.

Belongs to the purine/pyrimidine phosphoribosyltransferase family. PyrE subfamily. In terms of assembly, homodimer. Mg(2+) is required as a cofactor.

The enzyme catalyses orotidine 5'-phosphate + diphosphate = orotate + 5-phospho-alpha-D-ribose 1-diphosphate. The protein operates within pyrimidine metabolism; UMP biosynthesis via de novo pathway; UMP from orotate: step 1/2. Catalyzes the transfer of a ribosyl phosphate group from 5-phosphoribose 1-diphosphate to orotate, leading to the formation of orotidine monophosphate (OMP). This is Orotate phosphoribosyltransferase from Thermotoga neapolitana (strain ATCC 49049 / DSM 4359 / NBRC 107923 / NS-E).